A 700-amino-acid chain; its full sequence is Phenylalanine ammonia-lyase hkm12 (700 aa).

Tyr-82 (proton donor/acceptor) is an active-site residue. A cross-link (5-imidazolinone (Ala-Gly)) is located at residues 183–185 (ASG). Ser-184 bears the 2,3-didehydroalanine (Ser) mark. (E)-cinnamate-binding residues include Asn-242, Gln-325, Arg-331, Asn-361, Lys-432, Glu-460, and Asn-463.

The protein belongs to the PAL/histidase family. Contains an active site 4-methylidene-imidazol-5-one (MIO), which is formed autocatalytically by cyclization and dehydration of residues Ala-Ser-Gly.

It carries out the reaction L-phenylalanine = (E)-cinnamate + NH4(+). Its pathway is secondary metabolite biosynthesis. Its function is as follows. Phenylalanine ammonia-lyase; part of the gene cluster that mediates the biosynthesis of hancockiamides, an unusual new family of N-cinnamoylated piperazines. The NRPS hkm10 and the NmrA-like reductase hkm9 are proposed to convert two molecules of L-Phe to the intermediary piperazine called xenocockiamide A. Xenocockiamide A is then converted to hancockiamide D via a series of hydroxylations and O-methylations. The tyrosinase hkm6 may catalyze an aromatic hydroxylation, then the 2-oxoglutarate-dependent Fe(II) dioxygenase hkm4 and the FAD-dependent phenol hydroxylase hkm7 may catalyze consecutive hydroxylations to install 2 more hydroxy groups, and the methyltransferase hkm8 probably catalyzes two methylations using 2 molecules of S-adenosyl-L-methionine (SAM). The NRPS hkm11 activates and transfers trans-cinnamate supplied by the PAL hkm12 to hancockiamide D and produces hancockiamide A. NRPS Hkm11 has the flexibility to tolerate the bulky hancockiamide G as a substrate and the absence of the acetyl-transferase hkm3 opens up the opportunity for hkm11 to introduce a second N-cinnamoyl moiety. The cytochrome P450 monooxygenase hkm5 catalyzes the methylenedioxy bridge formation, converting hancockiamide A into hancockiamide G. Hkm5 can also convert hancockiamide B into hancockiamide C, and hancockiamide D into hancockiamide H. The N-acetyltransferase hkm3 finally transfers an acetyl group to 1-N of piperazine, converting hancockiamide A into hancockiamide B and hancockiamide G into hancockiamide C. The sequence is that of Phenylalanine ammonia-lyase hkm12 from Aspergillus hancockii.